The following is a 71-amino-acid chain: Beta-defensin 124 (71 aa).

The N-terminal stretch at 1-22 (MTQLLLFLVALLVLGHVPSGRS) is a signal peptide. 3 disulfides stabilise this stretch: C27–C54, C34–C48, and C38–C55.

This sequence belongs to the beta-defensin family.

The protein localises to the secreted. Functionally, has antibacterial activity. The sequence is that of Beta-defensin 124 (DEFB124) from Homo sapiens (Human).